Here is a 242-residue protein sequence, read N- to C-terminus: N-glycosylase/DNA lyase (242 aa).

3 residues coordinate 8-oxoguanine: glutamine 26, serine 53, and tryptophan 64. The interval 120 to 184 (EGYYKNMKML…EDLRIKSVTS (65 aa)) is helix-hairpin-helix. Lysine 144 functions as the Schiff-base intermediate with DNA in the catalytic mechanism. 8-oxoguanine contacts are provided by phenylalanine 148 and proline 174. Residue aspartate 176 is part of the active site. 8-oxoguanine-binding residues include aspartate 210 and tryptophan 214.

The protein belongs to the archaeal N-glycosylase/DNA lyase (AGOG) family.

The enzyme catalyses 2'-deoxyribonucleotide-(2'-deoxyribose 5'-phosphate)-2'-deoxyribonucleotide-DNA = a 3'-end 2'-deoxyribonucleotide-(2,3-dehydro-2,3-deoxyribose 5'-phosphate)-DNA + a 5'-end 5'-phospho-2'-deoxyribonucleoside-DNA + H(+). Functionally, DNA repair enzyme that is part of the base excision repair (BER) pathway; protects from oxidative damage by removing the major product of DNA oxidation, 8-oxoguanine (GO), from single- and double-stranded DNA substrates. This chain is N-glycosylase/DNA lyase, found in Pyrococcus furiosus (strain ATCC 43587 / DSM 3638 / JCM 8422 / Vc1).